Here is a 161-residue protein sequence, read N- to C-terminus: Ribosome maturation factor RimP (161 aa).

The protein belongs to the RimP family.

Its subcellular location is the cytoplasm. Functionally, required for maturation of 30S ribosomal subunits. This is Ribosome maturation factor RimP from Janthinobacterium sp. (strain Marseille) (Minibacterium massiliensis).